Reading from the N-terminus, the 343-residue chain is N-acetyl-gamma-glutamyl-phosphate reductase (343 aa).

Cys-147 is an active-site residue.

Belongs to the NAGSA dehydrogenase family. Type 1 subfamily.

It localises to the cytoplasm. The catalysed reaction is N-acetyl-L-glutamate 5-semialdehyde + phosphate + NADP(+) = N-acetyl-L-glutamyl 5-phosphate + NADPH + H(+). It participates in amino-acid biosynthesis; L-arginine biosynthesis; N(2)-acetyl-L-ornithine from L-glutamate: step 3/4. Functionally, catalyzes the NADPH-dependent reduction of N-acetyl-5-glutamyl phosphate to yield N-acetyl-L-glutamate 5-semialdehyde. The protein is N-acetyl-gamma-glutamyl-phosphate reductase of Staphylococcus aureus (strain Mu3 / ATCC 700698).